The primary structure comprises 235 residues: UPF0749 protein YlxX (235 aa).

The chain crosses the membrane as a helical span at residues 6-26 (SFISISVLMVIFGLMISVQFN).

The protein belongs to the UPF0749 family.

The protein localises to the cell membrane. This Bacillus subtilis (strain 168) protein is UPF0749 protein YlxX (ylxX).